The following is a 161-amino-acid chain: Type II secretion system protein M (161 aa).

The Cytoplasmic portion of the chain corresponds to 1–16 (MHNLLALWQQRTRRER). The chain crosses the membrane as a helical span at residues 17-36 (CLLLGMAVVLLIGLVYYTLW). The Periplasmic portion of the chain corresponds to 37-161 (QPWQNREAQW…TLVLERSDEK (125 aa)).

It belongs to the GSP M family. As to quaternary structure, type II secretion system is composed of four main components: the outer membrane complex, the inner membrane complex, the cytoplasmic secretion ATPase and the periplasm-spanning pseudopilus. Forms homodimers. Interacts with PulL/GspL. Interacts with PulE/GspE and PulF/GspF.

It is found in the cell inner membrane. Functionally, inner membrane component of the type II secretion system required for the energy-dependent secretion of extracellular factors such as proteases and toxins from the periplasm. Plays a role in the complex assembly and recruits PulL resulting in a stable complex in the inner membrane. Provides thus a link between the energy-providing PulE protein in the cytoplasm and the rest of the T2SS machinery. The polypeptide is Type II secretion system protein M (pulM) (Klebsiella pneumoniae).